The sequence spans 158 residues: Pyruvoyl-dependent arginine decarboxylase (158 aa).

A Pyruvic acid (Ser) modification is found at Ser-44.

This sequence belongs to the PdaD family. Pyruvate is required as a cofactor.

It carries out the reaction L-arginine + H(+) = agmatine + CO2. The protein is Pyruvoyl-dependent arginine decarboxylase of Thermococcus sibiricus (strain DSM 12597 / MM 739).